A 115-amino-acid polypeptide reads, in one-letter code: UPF0235 protein CTA_0423 (115 aa).

Belongs to the UPF0235 family.

This Chlamydia trachomatis serovar A (strain ATCC VR-571B / DSM 19440 / HAR-13) protein is UPF0235 protein CTA_0423.